Reading from the N-terminus, the 436-residue chain is uncharacterized protein (436 aa).

The next 12 membrane-spanning stretches (helical) occupy residues 38-58 (ILIF…TVGA), 70-90 (VAGI…LLIG), 102-122 (LAGG…AALI), 125-145 (VALL…NLQV), 160-180 (TAAS…PNLV), 197-217 (GPFI…LIFL), 254-274 (IMVG…IMTM), 291-311 (LVIG…GLLV), 319-339 (MAIA…IAPA), 342-362 (LSLL…GLLT), 383-403 (FDVL…MVVA), and 409-429 (ILSI…IWYF).

The protein belongs to the major facilitator superfamily.

It localises to the cell membrane. This is an uncharacterized protein from Bacillus subtilis (strain 168).